Here is a 106-residue protein sequence, read N- to C-terminus: ATP-dependent Clp protease adapter protein ClpS (106 aa).

This sequence belongs to the ClpS family. As to quaternary structure, binds to the N-terminal domain of the chaperone ClpA.

Its function is as follows. Involved in the modulation of the specificity of the ClpAP-mediated ATP-dependent protein degradation. The protein is ATP-dependent Clp protease adapter protein ClpS of Vibrio atlanticus (strain LGP32) (Vibrio splendidus (strain Mel32)).